We begin with the raw amino-acid sequence, 172 residues long: RNA silencing suppressor p19 (172 aa).

2 disordered regions span residues 1-38 (MEGA…ESPG) and 152-172 (VEGN…KESE). Composition is skewed to basic and acidic residues over residues 9–20 (DAREQANSERWD) and 159–172 (GRPE…KESE).

It belongs to the tombusvirus protein p19 family. In terms of assembly, homodimer.

Its function is as follows. Viral suppressor of RNA silencing which binds specifically to silencing RNAs (siRNAs). Acts as a molecular caliper to specifically select siRNAs based on the length of the duplex region of the RNA. This chain is RNA silencing suppressor p19, found in Havel river virus (HaRV).